Consider the following 769-residue polypeptide: MADDGMLLNFTFSDDVVKKSEPKLKGGTWRDRLSAKKIAQHRAQPRKPSDGTAAPRPVKNPNRIQVSGTRPAKRQRTDDDHDAGLRDHDRAGQSQHQHQHPRQFISSLFSKNPLPRNAEEPTDEAPAEDAKPTNAPLIDGLDTFTNLGLSPTLAAHLLTKLELKAPTAIQKASISQLLKEESDAFIQAETGSGKTLAYLLPLVQRIMALSHPTNRTDATSTTDAEGQPVVHRDSGLFAIVLAPTRELCKQISVVLEGLLRCAHWIVAGTVIGGEKKKSEKARLRKGLNILVATPGRLADHLENTQALDVSNVRWLVLDEGDRLMELGFEQELQGIIKKLDARQRPSRIPGVPTKRTTILCSATLKMNVQKLGEMSLKDAIHIKADPADEDGDAKPKNDDESAFTVPAQLKQSYAIVAAKLRLVTLTAFLKRTFMRKGSVMKAIVFVSCADSVDFHFEVFTRKLQDSDENAEDSDASDTKEKPAAFTHNTIARATAFSNPSNPVTLHRLHGSLPQHVRTSTLASFARNKDASVLVCTDVASRGLDLPNVDLVIEYDPAFSAEDHLHRIGRTARLGRDGRALIFLQPGCEEGYVEILKRGYRDGGKALTRTNADDILKRGFGGNVESENKDWEEKATDWQMDLERWALEKPESLEMARRAYQSHIRAYATHVASERSMFNIKELHLGHLAKAFALRDRPSKINVPGLRQGKDDTKKDYKAARAPAAGKKRKTPGGRDDDDIPAAADTASAAQKMRAKMKEHMAGASEFNLA.

A disordered region spans residues 1-137; the sequence is MADDGMLLNF…EDAKPTNAPL (137 aa). 2 stretches are compositionally biased toward basic and acidic residues: residues 15 to 34 and 75 to 91; these read DVVKKSEPKLKGGTWRDRLS and QRTDDDHDAGLRDHDRA. The short motif at 142 to 171 is the Q motif element; the sequence is DTFTNLGLSPTLAAHLLTKLELKAPTAIQK. Residues 175–382 form the Helicase ATP-binding domain; sequence SQLLKEESDA…EMSLKDAIHI (208 aa). Position 188–195 (188–195) interacts with ATP; it reads AETGSGKT. A DEAD box motif is present at residues 318–321; the sequence is DEGD. Residues 408–631 form the Helicase C-terminal domain; the sequence is QLKQSYAIVA…NVESENKDWE (224 aa). Positions 700–769 are disordered; the sequence is INVPGLRQGK…MAGASEFNLA (70 aa). The segment covering 707–718 has biased composition (basic and acidic residues); that stretch reads QGKDDTKKDYKA. Residues 740-749 are compositionally biased toward low complexity; that stretch reads PAAADTASAA.

This sequence belongs to the DEAD box helicase family. DDX31/DBP7 subfamily.

Its subcellular location is the nucleus. It is found in the nucleolus. The catalysed reaction is ATP + H2O = ADP + phosphate + H(+). In terms of biological role, ATP-binding RNA helicase involved in the biogenesis of 60S ribosomal subunits and is required for the normal formation of 25S and 5.8S rRNAs. The chain is ATP-dependent RNA helicase dbp7 (dbp7) from Aspergillus terreus (strain NIH 2624 / FGSC A1156).